A 1199-amino-acid chain; its full sequence is MNNLAGHLVKYGKHRVRRSYSRIKEVLDLPNLIEVQTDSYKWFLDEGLREMFDDIMPIEDFQGKLSLEFVDYQLLEPKYTVEEARQHDANYSAPLHVTLRLINHETGEIKSQDVFFGDFPLMTKQGTFIINGAERVIVSQLVRSPGVYFNSELDKNGRTNYGTTVIPNRGAWLEYETDAKNVAYVRIDRTRKIPLTELIRALGYGSDNEIVEILGSNSDSLMLTLEKDVHKNMDDSRVEESLKDIYERLRPGEPKTADSSRSLLTARFFDPKRYDLAPVGRYKINKKLDLKTRLLNLTVAETLADPDTGEIIVNKDEVIDKQVMDKLAPYLARDDFKTFTFHPSEEGVVQEPMTLQIVKVYSPKDPEKVVNVIGNANVDIQFKHITPADIVASMNYFFNLQEGMGSTDDIDHLGNRRTRSVGELLQNQFRIGLSRMERVVRERMSIQDTSTVTPQQLINIRPVVASIKEFFGSSQLSQFMDQTNPLGELSHKRRFSALGPGGLTRDRAGYEVRDVHYTHYGRMCPIETPEGPNIGLINSLSSYARINKYGFVETPYRRVSWETHKVTDKIDYLTADEEDNYVIAQANSPLNDDGSFVDDVVMARKKDDDVEISTEKVDYMDVSPKQVVAVATACIPFLENDDSNRALMGANMQRQAVPLIKPHAPLVGTGIEYKAAHDSGVALISEHEGTVEYVDAREIRVRRDDGSLDKYKLMKFHRSNGGKNYNQTPIVRVGDRVDADEVLADGPAMENGELALGQNPLIAFMTWDGYNFEDAIAINERLVKEDVYTSIHIEEHESEARDTKLGPEEITREIPNVGEDALKNLDEFGIIRIGAEVKDGDILVGKVTPKGVTELSAEERLLHAIFGEKAREVRDTSLRVPHGAGGIVQDVKIFTREGGDELSPGVNMMVRVYIAQKRKLQVGDKMAGRHGNKGTVSVVIPEEDMPFMPDGTPIDIMLSPMGVPSRMNIGQVLDLHLGMAARKLGIHVASPVFDGARDEDIWSALQEAGLPGDGKTVLYDGRTGEAFDNRIAVGVMYYLKLAHMVDDKIHARSIGPYSLVTQQPLGGKAQFGGQRFGEMEVWALEAYGAAYTLQEILTYKSDDVVGRVKTYEAIVKGEPIPKPGVPESFRVLVKELQALGMDMKVLDADKNEIELRDMDDEDDDIVNVDALKKFAKEQEEKKAKEAEQETAEKEETKTE.

Residues 1177-1199 (EQEEKKAKEAEQETAEKEETKTE) are disordered.

The protein belongs to the RNA polymerase beta chain family. The RNAP catalytic core consists of 2 alpha, 1 beta, 1 beta' and 1 omega subunit. When a sigma factor is associated with the core the holoenzyme is formed, which can initiate transcription.

The catalysed reaction is RNA(n) + a ribonucleoside 5'-triphosphate = RNA(n+1) + diphosphate. Functionally, DNA-dependent RNA polymerase catalyzes the transcription of DNA into RNA using the four ribonucleoside triphosphates as substrates. This is DNA-directed RNA polymerase subunit beta from Ligilactobacillus salivarius (strain UCC118) (Lactobacillus salivarius).